A 211-amino-acid polypeptide reads, in one-letter code: Small ribosomal subunit protein uS4 (211 aa).

Residues 98–161 (RRLDNVVYRL…RDIPFIKENL (64 aa)) enclose the S4 RNA-binding domain.

It belongs to the universal ribosomal protein uS4 family. In terms of assembly, part of the 30S ribosomal subunit. Contacts protein S5. The interaction surface between S4 and S5 is involved in control of translational fidelity.

Its function is as follows. One of the primary rRNA binding proteins, it binds directly to 16S rRNA where it nucleates assembly of the body of the 30S subunit. With S5 and S12 plays an important role in translational accuracy. The chain is Small ribosomal subunit protein uS4 from Aquifex aeolicus (strain VF5).